Here is a 616-residue protein sequence, read N- to C-terminus: Chaperone protein HscA (616 aa).

This sequence belongs to the heat shock protein 70 family.

In terms of biological role, chaperone involved in the maturation of iron-sulfur cluster-containing proteins. Has a low intrinsic ATPase activity which is markedly stimulated by HscB. Involved in the maturation of IscU. This chain is Chaperone protein HscA, found in Escherichia coli O7:K1 (strain IAI39 / ExPEC).